Here is a 266-residue protein sequence, read N- to C-terminus: Glutamate racemase (266 aa).

Substrate-binding positions include 9–10 (DS) and 41–42 (YG). Catalysis depends on Cys-72, which acts as the Proton donor/acceptor. Substrate is bound at residue 73-74 (NT). Residue Cys-184 is the Proton donor/acceptor of the active site. 185 to 186 (TH) is a substrate binding site.

This sequence belongs to the aspartate/glutamate racemases family.

The catalysed reaction is L-glutamate = D-glutamate. The protein operates within cell wall biogenesis; peptidoglycan biosynthesis. Functionally, provides the (R)-glutamate required for cell wall biosynthesis. In Staphylococcus carnosus (strain TM300), this protein is Glutamate racemase.